Consider the following 330-residue polypeptide: Tryptophan--tRNA ligase (330 aa).

ATP contacts are provided by residues 10 to 12 (QAT) and 18 to 19 (GN). Positions 11 to 19 (ATGSLHLGN) match the 'HIGH' region motif. Asp134 lines the L-tryptophan pocket. ATP is bound by residues 146–148 (GED), Ile186, and 195–199 (KMSKS). The short motif at 195 to 199 (KMSKS) is the 'KMSKS' region element.

Belongs to the class-I aminoacyl-tRNA synthetase family. Homodimer.

The protein resides in the cytoplasm. It carries out the reaction tRNA(Trp) + L-tryptophan + ATP = L-tryptophyl-tRNA(Trp) + AMP + diphosphate + H(+). In terms of biological role, catalyzes the attachment of tryptophan to tRNA(Trp). This is Tryptophan--tRNA ligase from Rickettsia conorii (strain ATCC VR-613 / Malish 7).